The primary structure comprises 349 residues: Hydroxymethylglutaryl-CoA synthase (349 aa).

(3S)-3-hydroxy-3-methylglutaryl-CoA-binding residues include Asp30 and Ala31. Glu82 serves as the catalytic Proton donor/acceptor. Cys114 and Thr155 together coordinate (3S)-3-hydroxy-3-methylglutaryl-CoA. The active-site Acyl-thioester intermediate is the Cys114. Arg203 provides a ligand contact to CoA. The (3S)-3-hydroxy-3-methylglutaryl-CoA site is built by Thr205 and His238. His238 serves as the catalytic Proton donor/acceptor. Lys243 lines the CoA pocket. The (3S)-3-hydroxy-3-methylglutaryl-CoA site is built by Asn270 and Ser300.

This sequence belongs to the thiolase-like superfamily. Archaeal HMG-CoA synthase family. As to quaternary structure, interacts with acetoacetyl-CoA thiolase that catalyzes the precedent step in the pathway and with a DUF35 protein. The acetoacetyl-CoA thiolase/HMG-CoA synthase complex channels the intermediate via a fused CoA-binding site, which allows for efficient coupling of the endergonic thiolase reaction with the exergonic HMGCS reaction.

The catalysed reaction is acetoacetyl-CoA + acetyl-CoA + H2O = (3S)-3-hydroxy-3-methylglutaryl-CoA + CoA + H(+). The protein operates within metabolic intermediate biosynthesis; (R)-mevalonate biosynthesis; (R)-mevalonate from acetyl-CoA: step 2/3. Its function is as follows. Catalyzes the condensation of acetyl-CoA with acetoacetyl-CoA to form 3-hydroxy-3-methylglutaryl-CoA (HMG-CoA). Functions in the mevalonate (MVA) pathway leading to isopentenyl diphosphate (IPP), a key precursor for the biosynthesis of isoprenoid compounds that are building blocks of archaeal membrane lipids. The chain is Hydroxymethylglutaryl-CoA synthase from Methanococcus maripaludis (strain C5 / ATCC BAA-1333).